The primary structure comprises 122 residues: Large ribosomal subunit protein bL12 (122 aa).

It belongs to the bacterial ribosomal protein bL12 family. As to quaternary structure, homodimer. Part of the ribosomal stalk of the 50S ribosomal subunit. Forms a multimeric L10(L12)X complex, where L10 forms an elongated spine to which 2 to 4 L12 dimers bind in a sequential fashion. Binds GTP-bound translation factors.

Its function is as follows. Forms part of the ribosomal stalk which helps the ribosome interact with GTP-bound translation factors. Is thus essential for accurate translation. The polypeptide is Large ribosomal subunit protein bL12 (Deinococcus radiodurans (strain ATCC 13939 / DSM 20539 / JCM 16871 / CCUG 27074 / LMG 4051 / NBRC 15346 / NCIMB 9279 / VKM B-1422 / R1)).